Reading from the N-terminus, the 303-residue chain is Ferrochelatase (303 aa).

Fe cation contacts are provided by His-185 and Glu-262.

Belongs to the ferrochelatase family.

It localises to the cytoplasm. The catalysed reaction is heme b + 2 H(+) = protoporphyrin IX + Fe(2+). It participates in porphyrin-containing compound metabolism; protoheme biosynthesis; protoheme from protoporphyrin-IX: step 1/1. Catalyzes the ferrous insertion into protoporphyrin IX. The chain is Ferrochelatase from Campylobacter jejuni subsp. jejuni serotype O:2 (strain ATCC 700819 / NCTC 11168).